The following is a 256-amino-acid chain: EF-hand calcium-binding domain-containing protein 4A (256 aa).

Over residues 1–10 the composition is skewed to basic residues; the sequence is MAHLGSRRRM. Residues 1-32 are disordered; that stretch reads MAHLGSRRRMSPGLRTRIAHRKAHRTPPSPLI. 2 consecutive EF-hand domains span residues 41–69 and 71–106; these read KAHE…QNEL and LTPE…LLGV. Ca(2+) contacts are provided by Asp84, Ser86, Asn88, Tyr90, and Glu95. The stretch at 190-235 forms a coiled coil; that stretch reads IRDVHHEKDTLEQALKRKETDHGREVRCLYEEMEQQIKIERERLLK.

This sequence belongs to the EFCAB4 family.

This is EF-hand calcium-binding domain-containing protein 4A (cracr2b) from Xenopus tropicalis (Western clawed frog).